The following is a 241-amino-acid chain: Proteasome subunit beta type-1 (241 aa).

The residue at position 1 (methionine 1) is an N-acetylmethionine. Residues 1 to 28 (MLSSTAMYSAPGRDLGMEPHRAAGPLQL) constitute a propeptide that is removed on maturation. Serine 58 carries O-linked (GlcNAc) serine glycosylation. Residues serine 62 and serine 68 each carry the phosphoserine modification. Tyrosine 150 is subject to Phosphotyrosine. A Phosphoserine modification is found at serine 162. Lysine 204 is modified (N6-acetyllysine). Serine 209 is a glycosylation site (O-linked (GlcNAc) serine).

Belongs to the peptidase T1B family. In terms of assembly, the 26S proteasome consists of a 20S proteasome core and two 19S regulatory subunits. The 20S proteasome core is a barrel-shaped complex made of 28 subunits that are arranged in four stacked rings. The two outer rings are each formed by seven alpha subunits, and the two inner rings are formed by seven beta subunits. The proteolytic activity is exerted by three beta-subunits PSMB5, PSMB6 and PSMB7. Interacts with SERPINB2. Interacts with RFPL4A. (Microbial infection) Interacts with HIV-1 protein Tat.

The protein localises to the cytoplasm. Its subcellular location is the nucleus. Its function is as follows. Non-catalytic component of the 20S core proteasome complex involved in the proteolytic degradation of most intracellular proteins. This complex plays numerous essential roles within the cell by associating with different regulatory particles. Associated with two 19S regulatory particles, forms the 26S proteasome and thus participates in the ATP-dependent degradation of ubiquitinated proteins. The 26S proteasome plays a key role in the maintenance of protein homeostasis by removing misfolded or damaged proteins that could impair cellular functions, and by removing proteins whose functions are no longer required. Associated with the PA200 or PA28, the 20S proteasome mediates ubiquitin-independent protein degradation. This type of proteolysis is required in several pathways including spermatogenesis (20S-PA200 complex) or generation of a subset of MHC class I-presented antigenic peptides (20S-PA28 complex). In Homo sapiens (Human), this protein is Proteasome subunit beta type-1.